The primary structure comprises 108 residues: MTSFAIYVLAALAEIAGCFGFWAWLRLGKSPAWAVLGVLSLVIFALLLTRIEAGAAGRAFAAYGGVYIIASLAWMQVVEGARPDRWDLIGGVICLAGAALILFGPRTN.

The next 4 helical transmembrane spans lie at 4–24 (FAIY…FWAW), 27–47 (LGKS…FALL), 59–79 (AFAA…QVVE), and 85–105 (RWDL…LFGP).

The protein belongs to the UPF0060 family.

The protein resides in the cell inner membrane. The chain is UPF0060 membrane protein CC_1976 from Caulobacter vibrioides (strain ATCC 19089 / CIP 103742 / CB 15) (Caulobacter crescentus).